The following is a 127-amino-acid chain: Cytochrome c2 (127 aa).

Residues 1–20 (MRKLVFGLFVLAASVAPAAA) form the signal peptide. The residue at position 21 (Q21) is a Pyrrolidone carboxylic acid. Heme c is bound by residues C33, C36, H37, and M99.

It belongs to the cytochrome c family. Post-translationally, binds 1 heme c group covalently per subunit.

Cytochrome c2 is found mainly in purple, non-sulfur, photosynthetic bacteria where it functions as the electron donor to the oxidized bacteriochlorophyll in the photophosphorylation pathway. However, it may also have a role in the respiratory chain and is found in some non-photosynthetic bacteria. The chain is Cytochrome c2 (cycA) from Blastochloris viridis (Rhodopseudomonas viridis).